A 102-amino-acid chain; its full sequence is Membrane-bound protein LytA (102 aa).

An N-terminal signal peptide occupies residues Met-1–Gly-16. Cys-17 is lipidated: N-palmitoyl cysteine. Cys-17 carries the S-diacylglycerol cysteine lipid modification.

The protein resides in the cell membrane. In terms of biological role, possible role in the secretion of LytB and LytC. This chain is Membrane-bound protein LytA (lytA), found in Bacillus subtilis (strain 168).